We begin with the raw amino-acid sequence, 335 residues long: Phosphate acyltransferase (335 aa).

It belongs to the PlsX family. In terms of assembly, homodimer. Probably interacts with PlsY.

The protein localises to the cytoplasm. The catalysed reaction is a fatty acyl-[ACP] + phosphate = an acyl phosphate + holo-[ACP]. It participates in lipid metabolism; phospholipid metabolism. Its function is as follows. Catalyzes the reversible formation of acyl-phosphate (acyl-PO(4)) from acyl-[acyl-carrier-protein] (acyl-ACP). This enzyme utilizes acyl-ACP as fatty acyl donor, but not acyl-CoA. This is Phosphate acyltransferase from Streptococcus equi subsp. equi (strain 4047).